The sequence spans 70 residues: Probable protein transport protein Sec61 subunit gamma (70 aa).

Over 1–39 (MADQIQEILDVPREFLKDGIQFIKKCQKPDRREFIKISQ) the chain is Cytoplasmic. Residues 40-58 (AVGTGFLIMGAVGYLVKLI) form a helical membrane-spanning segment. Over 59–70 (HIPLNQVLVGGA) the chain is Extracellular.

This sequence belongs to the SecE/SEC61-gamma family. In terms of assembly, heterotrimeric complex composed of SEC61-alpha, SEC61-beta and SEC61-gamma.

It is found in the endoplasmic reticulum membrane. Necessary for protein translocation in the endoplasmic reticulum. In Neurospora crassa (strain ATCC 24698 / 74-OR23-1A / CBS 708.71 / DSM 1257 / FGSC 987), this protein is Probable protein transport protein Sec61 subunit gamma.